Consider the following 86-residue polypeptide: RNA-binding protein Hfq (86 aa).

The Sm domain occupies 9-68 (DPYLNTLRKEKVPVSIYLVNGIKLQGSIESFDQFVVLLKNTVSQMVYKHAISTVVPARPV). A disordered region spans residues 66 to 86 (RPVRLPSPTDSEHGDSEPGNA). Positions 75–86 (DSEHGDSEPGNA) are enriched in basic and acidic residues.

Belongs to the Hfq family. Homohexamer.

In terms of biological role, RNA chaperone that binds small regulatory RNA (sRNAs) and mRNAs to facilitate mRNA translational regulation in response to envelope stress, environmental stress and changes in metabolite concentrations. Also binds with high specificity to tRNAs. This Pseudomonas putida (strain ATCC 700007 / DSM 6899 / JCM 31910 / BCRC 17059 / LMG 24140 / F1) protein is RNA-binding protein Hfq.